We begin with the raw amino-acid sequence, 847 residues long: Follistatin-related protein 5 (847 aa).

Residues 1–20 form the signal peptide; the sequence is MFKCWSVVLVLGFIFLESEG. A Kazal-like domain is found at 83-135; it reads GQAECACMDLCKRHYKPVCGSDGEFYENHCEVHRAACLKKQKITIVHNEDCFF. 3 disulfides stabilise this stretch: C89-C119, C93-C112, and C101-C133. EF-hand domains lie at 175–210 and 211–246; these read RKKL…EELG and KDLF…QVIQ. 9 residues coordinate Ca(2+): D188, D190, N192, E199, D226, N228, D230, H232, and E237. Ig-like domains lie at 250 to 337 and 341 to 426; these read PEDQ…IFQV and PVIR…EDIS. Disulfide bonds link C270–C321 and C362–C413. N-linked (GlcNAc...) asparagine glycans are attached at residues N318 and N394.

Its subcellular location is the secreted. The sequence is that of Follistatin-related protein 5 (FSTL5) from Homo sapiens (Human).